Here is a 192-residue protein sequence, read N- to C-terminus: Cytochrome b-245 light chain (192 aa).

The Cytoplasmic portion of the chain corresponds to 2-7; sequence GQIEWA. A helical membrane pass occupies residues 8-30; that stretch reads MWANEQALASGLILITGGIVATA. Topologically, residues 31 to 35 are extracellular; it reads GQFAQ. A helical membrane pass occupies residues 36–53; it reads WYLGAYSIAAGVLICLLE. Residues 54-69 are Cytoplasmic-facing; that stretch reads YPRGKRSKGSTMERCG. Residues 70–80 lie within the membrane without spanning it; the sequence is QKYLTRAVKVF. Residues 81–86 are Cytoplasmic-facing; that stretch reads GPLTSN. The chain crosses the membrane as a helical span at residues 87 to 104; that stretch reads YYIRAFLHLGLSVPAGFL. L105 is a topological domain (extracellular). A helical transmembrane segment spans residues 106–126; it reads ATILGTACLAIASSIYLLAAI. Residues 127-192 are Cytoplasmic-facing; the sequence is HGEHWTPIET…NPMPVTDEVV (66 aa). Residues 134-192 form a disordered region; that stretch reads IETKPKERPQVGGTIKQPPSNPPPRPPAEARKKPSEEEVAGVPGGGPQENPMPVTDEVV. T147 is subject to Phosphothreonine. K149 is covalently cross-linked (Glycyl lysine isopeptide (Lys-Gly) (interchain with G-Cter in ubiquitin)). A Phosphoserine modification is found at S168.

It belongs to the p22phox family. As to quaternary structure, component of the phagocyte NADPH oxidase core complex/cytochrome b558 complex, composed of CYBB (heavy chain (beta)) and CYBA (light chain (alpha)). Component of the phagocyte NADPH oxidase complex composed of an obligatory core heterodimer formed by the membrane proteins CYBA and CYBB and the cytosolic regulatory subunits NCF1/p47-phox, NCF2/p67-phox, NCF4/p40-phox and the small GTPase RAC1 or RAC2. Interacts with NCF1 (via SH3 domain). Interacts with SH3PXD2A. Interacts with DUOX1, DUOX2 and TPO. Interacts with NOX4; this interaction mediates superoxide generation. Interacts with calprotectin (S100A8/9). Interacts with GBP7. Interacts with NOXO1. Forms a heterodimer with NOX3 and is essential for activity and cell membrane localization of NOX3. Interacts with NOX1. In terms of processing, phosphorylation at Thr-147 enhances NADPH oxidase activity by promoting NCF1/p47-phox binding. Ubiquitinated at Lys-149 likely by RNF145.

The protein resides in the cell membrane. In terms of biological role, subunit of NADPH oxidase complexes that is required for the NADPH oxidase activity that generates, in various cell types, superoxide from molecular oxygen utilizing NADPH as an electron donor. Subunit of the phagocyte NADPH oxidase complex that mediates the transfer of electrons from cytosolic NADPH to O2 to produce the superoxide anion (O2(-)). In the activated complex, electrons are first transferred from NADPH to flavin adenine dinucleotide (FAD) and subsequently transferred via two heme molecules to molecular oxygen, producing superoxide through an outer-sphere reaction. Activation of the NADPH oxidase complex is initiated by the assembly of cytosolic subunits of the NADPH oxidase complex with the core NADPH oxidase complex to form a complex at the plasma membrane or phagosomal membrane. This activation process is initiated by phosphorylation dependent binding of the cytosolic NCF1/p47-phox subunit to the C-terminus of CYBA/p22-phox. Aassociates with NOX3 to form a functional NADPH oxidase constitutively generating superoxide. The chain is Cytochrome b-245 light chain from Tursiops truncatus (Atlantic bottle-nosed dolphin).